The primary structure comprises 92 residues: Large ribosomal subunit protein bL28 (92 aa).

The protein belongs to the bacterial ribosomal protein bL28 family.

In Borrelia duttonii (strain Ly), this protein is Large ribosomal subunit protein bL28.